The primary structure comprises 346 residues: uncharacterized protein (346 aa).

Belongs to the Gfo/Idh/MocA family.

This is an uncharacterized protein from Escherichia coli (strain K12).